A 474-amino-acid chain; its full sequence is 3-isopropylmalate dehydratase large subunit (474 aa).

Cys-353, Cys-414, and Cys-417 together coordinate [4Fe-4S] cluster.

The protein belongs to the aconitase/IPM isomerase family. LeuC type 1 subfamily. As to quaternary structure, heterodimer of LeuC and LeuD. It depends on [4Fe-4S] cluster as a cofactor.

It carries out the reaction (2R,3S)-3-isopropylmalate = (2S)-2-isopropylmalate. The protein operates within amino-acid biosynthesis; L-leucine biosynthesis; L-leucine from 3-methyl-2-oxobutanoate: step 2/4. In terms of biological role, catalyzes the isomerization between 2-isopropylmalate and 3-isopropylmalate, via the formation of 2-isopropylmaleate. This Pseudomonas paraeruginosa (strain DSM 24068 / PA7) (Pseudomonas aeruginosa (strain PA7)) protein is 3-isopropylmalate dehydratase large subunit.